A 319-amino-acid chain; its full sequence is ATP-dependent 6-phosphofructokinase (319 aa).

G11 lines the ATP pocket. An ADP-binding site is contributed by R21–R25. ATP is bound by residues R72 to S73 and G102 to S105. Mg(2+) is bound at residue D103. A substrate-binding site is contributed by T125–D127. The active-site Proton acceptor is the D127. R154 is a binding site for ADP. Residues R162 and M169 to R171 each bind substrate. Residues G185 to E187, R211, and K213 to H215 each bind ADP. Residues E222, R243, and H249 to R252 each bind substrate.

The protein belongs to the phosphofructokinase type A (PFKA) family. ATP-dependent PFK group I subfamily. Prokaryotic clade 'B1' sub-subfamily. Homotetramer. Mg(2+) is required as a cofactor.

The protein localises to the cytoplasm. It carries out the reaction beta-D-fructose 6-phosphate + ATP = beta-D-fructose 1,6-bisphosphate + ADP + H(+). It participates in carbohydrate degradation; glycolysis; D-glyceraldehyde 3-phosphate and glycerone phosphate from D-glucose: step 3/4. With respect to regulation, allosterically activated by ADP and other diphosphonucleosides, and allosterically inhibited by phosphoenolpyruvate. In terms of biological role, catalyzes the phosphorylation of D-fructose 6-phosphate to fructose 1,6-bisphosphate by ATP, the first committing step of glycolysis. In Natranaerobius thermophilus (strain ATCC BAA-1301 / DSM 18059 / JW/NM-WN-LF), this protein is ATP-dependent 6-phosphofructokinase.